A 394-amino-acid polypeptide reads, in one-letter code: Tryptophan synthase beta chain (394 aa).

Lys84 bears the N6-(pyridoxal phosphate)lysine mark.

It belongs to the TrpB family. Tetramer of two alpha and two beta chains. The cofactor is pyridoxal 5'-phosphate.

It catalyses the reaction (1S,2R)-1-C-(indol-3-yl)glycerol 3-phosphate + L-serine = D-glyceraldehyde 3-phosphate + L-tryptophan + H2O. It functions in the pathway amino-acid biosynthesis; L-tryptophan biosynthesis; L-tryptophan from chorismate: step 5/5. Its function is as follows. The beta subunit is responsible for the synthesis of L-tryptophan from indole and L-serine. This is Tryptophan synthase beta chain from Clostridium acetobutylicum (strain ATCC 824 / DSM 792 / JCM 1419 / IAM 19013 / LMG 5710 / NBRC 13948 / NRRL B-527 / VKM B-1787 / 2291 / W).